We begin with the raw amino-acid sequence, 420 residues long: Bone morphogenetic protein 2 (420 aa).

A signal peptide spans 1-23; it reads MVAVVRSLMVLLLAQVLLEGATG. The propeptide occupies 24-303; it reads LIPEVGRRRY…DSVLHTREKR (280 aa). Asparagine 138, asparagine 167, asparagine 168, asparagine 172, and asparagine 362 each carry an N-linked (GlcNAc...) asparagine glycan. 3 disulfide bridges follow: cysteine 320–cysteine 385, cysteine 349–cysteine 417, and cysteine 353–cysteine 419.

This sequence belongs to the TGF-beta family. As to quaternary structure, homodimer; disulfide-linked.

The protein resides in the secreted. Functionally, induces cartilage and bone formation. The chain is Bone morphogenetic protein 2 (bmp2) from Tetraodon nigroviridis (Spotted green pufferfish).